We begin with the raw amino-acid sequence, 319 residues long: 33 kDa chaperonin (319 aa).

2 disulfides stabilise this stretch: cysteine 239–cysteine 241 and cysteine 272–cysteine 275. The segment at 300–319 is disordered; it reads EVSEEMKKAEEKEKEEKNKK.

The protein belongs to the HSP33 family. In terms of processing, under oxidizing conditions two disulfide bonds are formed involving the reactive cysteines. Under reducing conditions zinc is bound to the reactive cysteines and the protein is inactive.

The protein resides in the cytoplasm. Functionally, redox regulated molecular chaperone. Protects both thermally unfolding and oxidatively damaged proteins from irreversible aggregation. Plays an important role in the bacterial defense system toward oxidative stress. This Clostridium perfringens (strain ATCC 13124 / DSM 756 / JCM 1290 / NCIMB 6125 / NCTC 8237 / Type A) protein is 33 kDa chaperonin.